Reading from the N-terminus, the 300-residue chain is Ribosomal protein L11 methyltransferase (300 aa).

The S-adenosyl-L-methionine site is built by threonine 152, glycine 173, aspartate 195, and asparagine 234.

This sequence belongs to the methyltransferase superfamily. PrmA family.

The protein resides in the cytoplasm. It catalyses the reaction L-lysyl-[protein] + 3 S-adenosyl-L-methionine = N(6),N(6),N(6)-trimethyl-L-lysyl-[protein] + 3 S-adenosyl-L-homocysteine + 3 H(+). Methylates ribosomal protein L11. This is Ribosomal protein L11 methyltransferase from Paraburkholderia phymatum (strain DSM 17167 / CIP 108236 / LMG 21445 / STM815) (Burkholderia phymatum).